The sequence spans 1344 residues: Centrosomal P4.1-associated protein (1344 aa).

2 disordered regions span residues 67–123 (SSEE…NNDL) and 187–225 (PGTL…ASNV). Positions 211 to 225 (SYSNPTQENSCASNV) are enriched in polar residues. Position 248 is a phosphoserine (serine 248). The disordered stretch occupies residues 257 to 300 (QEAHVKRNDLKEESPAHPSGEGALPRWEKKMGRSQEGKDVNLQK). Basic and acidic residues-rich tracts occupy residues 259 to 271 (AHVK…EESP) and 282 to 297 (RWEK…KDVN). Residue serine 304 is modified to Phosphoserine. The tract at residues 307-382 (VVNIDERPIK…FTNAKSKFQK (76 aa)) is alpha/beta-tubulin binding. Disordered stretches follow at residues 347-407 (QEAE…DRQH) and 425-470 (TVKK…KKRD). Residues 388 to 398 (LASTQSPSEDQ) show a composition bias toward polar residues. Serine 528 carries the phosphoserine modification. Residues serine 577 and serine 583 each carry the phosphoserine; by PLK2 modification. 2 disordered regions span residues 600–626 (RLSS…SNCS) and 672–735 (TSEI…DTGA). Residues 709-720 (VGDRVFSNREDS) are compositionally biased toward basic and acidic residues. The residue at position 748 (serine 748) is a Phosphoserine. The interval 887–1344 (QPPEFMVCFI…DGNVLMDTEM (458 aa)) is interaction with STIL. The disordered stretch occupies residues 1105–1133 (QGNLSRRIKSAPPRDLGSSDKGQAALPRE).

This sequence belongs to the TCP10 family. As to quaternary structure, forms homodimers. Associates with microtubules plus ends; binds to beta-tubulin subunits exposed on microtubule outer surface at its distal tip; also associates with microtubule lattice. Associated with the gamma-tubulin complex. Interacts with the head domain of EPB41. Interacts with LYST. Interacts with CEP152 (via C-terminus). Interacts with STIL. Forms a complex with STIL and SASS6. Phosphorylation at Ser-577 and Ser-583 by PLK2 is required for procentriole formation and centriole elongation. Phosphorylation by PLK2 oscillates during the cell cycle: it increases at G1/S transition and decreases during the exit from mitosis. Phosphorylation at Ser-583 is also mediated by PLK4 but is not a critical step in PLK4 function in procentriole assembly.

The protein localises to the cytoplasm. It localises to the cytoskeleton. Its subcellular location is the microtubule organizing center. The protein resides in the centrosome. It is found in the centriole. In terms of biological role, plays an important role in cell division and centrosome function by participating in centriole duplication. Inhibits microtubule nucleation from the centrosome. Involved in the regulation of slow processive growth of centriolar microtubules. Acts as microtubule plus-end tracking protein that stabilizes centriolar microtubules and inhibits microtubule polymerization and extension from the distal ends of centrioles. Required for centriole elongation and for STIL-mediated centriole amplification. Required for the recruitment of CEP295 to the proximal end of new-born centrioles at the centriolar microtubule wall during early S phase in a PLK4-dependent manner. May be involved in the control of centriolar-microtubule growth by acting as a regulator of tubulin release. The protein is Centrosomal P4.1-associated protein (Cpap) of Mus musculus (Mouse).